We begin with the raw amino-acid sequence, 530 residues long: Na(+)/H(+) antiporter NhaB (530 aa).

A run of 12 helical transmembrane segments spans residues 13–33 (FLGKAPDWYKIAILSFLVINP), 34–54 (LVFFFVDPFTAGWLLVVEFIF), 90–110 (LVANIEVLLLLVFMVAGIYFM), 121–141 (ILIGIKSKTALSVAFCFTAAF), 145–165 (FLDALTVIAVVISVAVGFYAI), 205–225 (LLIHAGVGTALGGVMTMVGEP), 241–261 (FIIRMLPITAPVFICGILTCI), 306–326 (GLIAVWLIVGLALHLAAVGLI), 327–347 (GLSVIILATAFTGVIEEHSMG), 351–371 (EEALPFTALLAVFFAVVAVII), 455–475 (GQAAFLFLLTSALAPLIQLSY), and 481–501 (MALPYTIVLALVGMFGIIFFL).

It belongs to the NhaB Na(+)/H(+) (TC 2.A.34) antiporter family.

The protein resides in the cell inner membrane. The enzyme catalyses 2 Na(+)(in) + 3 H(+)(out) = 2 Na(+)(out) + 3 H(+)(in). Na(+)/H(+) antiporter that extrudes sodium in exchange for external protons. The polypeptide is Na(+)/H(+) antiporter NhaB (Aliivibrio fischeri (strain MJ11) (Vibrio fischeri)).